The primary structure comprises 337 residues: tRNA N6-adenosine threonylcarbamoyltransferase (337 aa).

His111 and His115 together coordinate Fe cation. Substrate-binding positions include 134 to 138, Asp167, Gly180, and Asn272; that span reads LVSGG. Asp300 serves as a coordination point for Fe cation.

Belongs to the KAE1 / TsaD family. It depends on Fe(2+) as a cofactor.

Its subcellular location is the cytoplasm. It catalyses the reaction L-threonylcarbamoyladenylate + adenosine(37) in tRNA = N(6)-L-threonylcarbamoyladenosine(37) in tRNA + AMP + H(+). Functionally, required for the formation of a threonylcarbamoyl group on adenosine at position 37 (t(6)A37) in tRNAs that read codons beginning with adenine. Is involved in the transfer of the threonylcarbamoyl moiety of threonylcarbamoyl-AMP (TC-AMP) to the N6 group of A37, together with TsaE and TsaB. TsaD likely plays a direct catalytic role in this reaction. In Salmonella choleraesuis (strain SC-B67), this protein is tRNA N6-adenosine threonylcarbamoyltransferase.